The chain runs to 1072 residues: Integrin alpha-6 (1072 aa).

An N-terminal signal peptide occupies residues 1-18 (MAAALLLYLPLLPGLAGA). The Extracellular portion of the chain corresponds to 19–1010 (FNLDAENVIG…FPAKPVALYT (992 aa)). FG-GAP repeat units lie at residues 23-88 (AENV…DTRC), 94-160 (DEDT…IKDD), 170-223 (DGRL…FYDL), 238-295 (RQDK…QRAL), 296-357 (SLEH…KWEG), 358-413 (IKPI…GINT), and 414-476 (EPAQ…VQPD). Residue N71 is glycosylated (N-linked (GlcNAc...) asparagine). 3 disulfide bridges follow: C79-C88, C125-C148, and C169-C182. N-linked (GlcNAc...) asparagine glycosylation is found at N217 and N278. Residues D318, N320, D322, and D326 each coordinate Ca(2+). N-linked (GlcNAc...) asparagine glycosylation is present at N364. 10 residues coordinate Ca(2+): D380, N382, D384, Y386, D388, D438, D440, N442, Y444, and D446. An intrachain disulfide couples C498 to C557. Residues N515 and N609 are each glycosylated (N-linked (GlcNAc...) asparagine). 2 disulfide bridges follow: C625–C631 and C725–C736. 3 N-linked (GlcNAc...) asparagine glycosylation sites follow: N730, N747, and N780. Disulfide bonds link C880–C927 and C933–C938. N957 carries an N-linked (GlcNAc...) asparagine glycan. The helical transmembrane segment at 1011 to 1036 (GVPWWIIAVAIFAGVLMLALLVFLLW) threads the bilayer. The Cytoplasmic segment spans residues 1037–1072 (KCGFFKRSKKDHYDATYHKAEIHAQPSDKERLTSDA). C1038 carries the S-palmitoyl cysteine; by DHHC3 lipid modification. Positions 1039–1043 (GFFKR) match the GFFKR motif motif. S1070 is modified (phosphoserine; by CaMK2).

This sequence belongs to the integrin alpha chain family. Heterodimer of an alpha and a beta subunit. The alpha subunit is composed of a heavy and a light chain linked by a disulfide bond. Alpha-6 associates with either beta-1 (ITGB1) or beta-4 (ITGB4) to form ITGA6:ITGB1 and ITGA6:ITGB4, respectively. Phosphorylated in vivo.

The protein localises to the cell membrane. Its function is as follows. Integrin alpha-6/beta-1 (ITGA6:ITGB1) is a receptor for laminin on platelets. Integrin alpha-6/beta-1 (ITGA6:ITGB1) is present in oocytes and is involved in sperm-egg fusion. Integrin alpha-6/beta-4 (ITGA6:ITGB4) is a receptor for laminin in epithelial cells and it plays a critical structural role in the hemidesmosome. This Gallus gallus (Chicken) protein is Integrin alpha-6 (ITGA6).